Here is a 307-residue protein sequence, read N- to C-terminus: HTH-type transcriptional regulator DmlR (307 aa).

The HTH lysR-type domain maps to 5–62 (PLLNDLRVFMLVARRAGFAAVAEELGVSPAFVSKRIALLEQTLNVVLLHRTTRRVTIT). A DNA-binding region (H-T-H motif) is located at residues 22–41 (FAAVAEELGVSPAFVSKRIA).

Belongs to the LysR transcriptional regulatory family.

In terms of biological role, transcriptional regulator required for the aerobic growth on D-malate as the sole carbon source. Induces the expression of dmlA in response to D-malate or L- or meso-tartrate. Negatively regulates its own expression. The polypeptide is HTH-type transcriptional regulator DmlR (dmlR) (Escherichia coli (strain K12)).